Here is a 448-residue protein sequence, read N- to C-terminus: Tumor necrosis factor receptor superfamily member EDAR (448 aa).

Positions 1–26 (MAHVGDCKWMSWLPVLVVSLMCSAKA) are cleaved as a signal peptide. The Extracellular segment spans residues 27 to 187 (EDSNCGENEY…LSGQGHLATA (161 aa)). 3 TNFR-Cys repeats span residues 30-71 (NCGE…DYGC), 73-113 (PCPA…DAEC), and 115-150 (PCLP…ECVG). Cystine bridges form between Cys31/Cys44, Cys47/Cys60, Cys50/Cys71, Cys74/Cys87, Cys93/Cys113, and Cys135/Cys148. The N-linked (GlcNAc...) asparagine glycan is linked to Asn38. Residues 188–208 (LIIAMSTIFIMAIAIVLIIMF) traverse the membrane as a helical segment. At 209-448 (YIMKTKPSAP…PPASPPPAAS (240 aa)) the chain is on the cytoplasmic side. Residues 220–229 (CCSSPPGKSA) are compositionally biased toward low complexity. Positions 220 to 297 (CCSSPPGKSA…EEPAPDKQGS (78 aa)) are disordered. The segment covering 258–283 (LTATPTKTPKSENDASSENEQLLSRS) has biased composition (polar residues). A Death domain is found at 358–431 (RMLSSTYNSE…DAVESLCADI (74 aa)).

In terms of assembly, binds to EDARADD. Associates with TRAF1, TRAF2, TRAF3 and NIK.

It is found in the membrane. Receptor for EDA isoform TAA, but not for EDA isoform TA-2. May mediate the activation of NF-kappa-B and JNK. May promote caspase-independent cell death. The sequence is that of Tumor necrosis factor receptor superfamily member EDAR (Edar) from Mus musculus (Mouse).